We begin with the raw amino-acid sequence, 555 residues long: Urocanate hydratase (555 aa).

Residues 52 to 53 (GG), Q130, 176 to 178 (GMG), E196, R201, 242 to 243 (NA), 263 to 267 (QTSAH), 273 to 274 (YL), and Y322 each bind NAD(+). The active site involves C410. G492 serves as a coordination point for NAD(+).

This sequence belongs to the urocanase family. It depends on NAD(+) as a cofactor.

It is found in the cytoplasm. The catalysed reaction is 4-imidazolone-5-propanoate = trans-urocanate + H2O. Its pathway is amino-acid degradation; L-histidine degradation into L-glutamate; N-formimidoyl-L-glutamate from L-histidine: step 2/3. Functionally, catalyzes the conversion of urocanate to 4-imidazolone-5-propionate. The chain is Urocanate hydratase from Shewanella baltica (strain OS195).